Reading from the N-terminus, the 493-residue chain is Inosine-5'-monophosphate dehydrogenase (493 aa).

CBS domains are found at residues 97–155 (VIID…NAPI) and 159–219 (MTSE…AKDE). Residues Asp-253 and 303–305 (GIG) contribute to the NAD(+) site. Residues Gly-305 and Gly-307 each contribute to the K(+) site. Residue Ser-308 coordinates IMP. Residue Cys-310 coordinates K(+). The Thioimidate intermediate role is filled by Cys-310. IMP-binding positions include 343-345 (DGG), 366-367 (GS), and 390-394 (YRGMG). The active-site Proton acceptor is Arg-406. An IMP-binding site is contributed by Glu-421. K(+)-binding residues include Glu-475, Ser-476, and His-477.

The protein belongs to the IMPDH/GMPR family. As to quaternary structure, homotetramer. K(+) serves as cofactor.

The enzyme catalyses IMP + NAD(+) + H2O = XMP + NADH + H(+). It participates in purine metabolism; XMP biosynthesis via de novo pathway; XMP from IMP: step 1/1. Its activity is regulated as follows. Mycophenolic acid (MPA) is a non-competitive inhibitor that prevents formation of the closed enzyme conformation by binding to the same site as the amobile flap. In contrast, mizoribine monophosphate (MZP) is a competitive inhibitor that induces the closed conformation. MPA is a potent inhibitor of mammalian IMPDHs but a poor inhibitor of the bacterial enzymes. MZP is a more potent inhibitor of bacterial IMPDH. In terms of biological role, catalyzes the conversion of inosine 5'-phosphate (IMP) to xanthosine 5'-phosphate (XMP), the first committed and rate-limiting step in the de novo synthesis of guanine nucleotides, and therefore plays an important role in the regulation of cell growth. The chain is Inosine-5'-monophosphate dehydrogenase from Streptococcus pyogenes serotype M3 (strain ATCC BAA-595 / MGAS315).